Consider the following 316-residue polypeptide: Phosphate acyltransferase (316 aa).

The protein belongs to the PlsX family. Homodimer. Probably interacts with PlsY.

It is found in the cytoplasm. The enzyme catalyses a fatty acyl-[ACP] + phosphate = an acyl phosphate + holo-[ACP]. The protein operates within lipid metabolism; phospholipid metabolism. In terms of biological role, catalyzes the reversible formation of acyl-phosphate (acyl-PO(4)) from acyl-[acyl-carrier-protein] (acyl-ACP). This enzyme utilizes acyl-ACP as fatty acyl donor, but not acyl-CoA. The polypeptide is Phosphate acyltransferase (Chlamydia abortus (strain DSM 27085 / S26/3) (Chlamydophila abortus)).